The following is a 430-amino-acid chain: Serine hydroxymethyltransferase (430 aa).

Residues L126 and 130–132 (GHL) each bind (6S)-5,6,7,8-tetrahydrofolate. Residue K235 is modified to N6-(pyridoxal phosphate)lysine.

The protein belongs to the SHMT family. Homodimer. Pyridoxal 5'-phosphate serves as cofactor.

It is found in the cytoplasm. It catalyses the reaction (6R)-5,10-methylene-5,6,7,8-tetrahydrofolate + glycine + H2O = (6S)-5,6,7,8-tetrahydrofolate + L-serine. It functions in the pathway one-carbon metabolism; tetrahydrofolate interconversion. The protein operates within amino-acid biosynthesis; glycine biosynthesis; glycine from L-serine: step 1/1. Catalyzes the reversible interconversion of serine and glycine with tetrahydrofolate (THF) serving as the one-carbon carrier. This reaction serves as the major source of one-carbon groups required for the biosynthesis of purines, thymidylate, methionine, and other important biomolecules. Also exhibits THF-independent aldolase activity toward beta-hydroxyamino acids, producing glycine and aldehydes, via a retro-aldol mechanism. The protein is Serine hydroxymethyltransferase of Leifsonia xyli subsp. xyli (strain CTCB07).